Reading from the N-terminus, the 385-residue chain is Protein pelota homolog (385 aa).

K162 is covalently cross-linked (Glycyl lysine isopeptide (Lys-Gly) (interchain with G-Cter in SUMO2)). Phosphoserine occurs at positions 374, 380, 381, and 382.

The protein belongs to the eukaryotic release factor 1 family. Pelota subfamily. In terms of assembly, component of the Pelota-HBS1L complex, also named Dom34-Hbs1 complex, composed of PELO and HBS1L. Interacts with PINK1. Interacts with ABCE1. Interacts with CNOT4. Requires a divalent metal cation as cofactor. In terms of tissue distribution, ubiquitously expressed.

The protein resides in the cytoplasm. Component of the Pelota-HBS1L complex, a complex that recognizes stalled ribosomes and triggers the No-Go Decay (NGD) pathway. In the Pelota-HBS1L complex, PELO recognizes ribosomes stalled at the 3' end of an mRNA and engages stalled ribosomes by destabilizing mRNA in the mRNA channel. Following mRNA extraction from stalled ribosomes by the SKI complex, the Pelota-HBS1L complex promotes recruitment of ABCE1, which drives the disassembly of stalled ribosomes, followed by degradation of damaged mRNAs as part of the NGD pathway. As part of the PINK1-regulated signaling, upon mitochondrial damage is recruited to the ribosome/mRNA-ribonucleoprotein complex associated to mitochondrial outer membrane thereby enabling the recruitment of autophagy receptors and induction of mitophagy. In Homo sapiens (Human), this protein is Protein pelota homolog.